The primary structure comprises 831 residues: G-type lectin S-receptor-like serine/threonine-protein kinase At1g61390 (831 aa).

The first 42 residues, 1–42 (MYKLPQRNCADKQEYTVHMRKMGMVIFACLLLLIIFPTFGYA), serve as a signal peptide directing secretion. The Bulb-type lectin domain maps to 43–162 (DINTSSPLSI…VSGKTLWKSF (120 aa)). Topologically, residues 43–448 (DINTSSPLSI…SSELAGSNRT (406 aa)) are extracellular. N-linked (GlcNAc...) asparagine glycans are attached at residues Asn45, Asn71, Asn106, and Asn112. Residues 298–334 (PTSSCDLYRACGPFGLCVRSRNPKCICLKGFVPKSDD) form the EGF-like; atypical domain. Disulfide bonds link Cys302-Cys314 and Cys308-Cys322. N-linked (GlcNAc...) asparagine glycans are attached at residues Asn340, Asn356, Asn399, and Asn446. In terms of domain architecture, PAN spans 353–439 (CHTNSSTKTQ…GESLSLRLAS (87 aa)). Cystine bridges form between Cys392–Cys413 and Cys396–Cys402. The helical transmembrane segment at 449–469 (KIILGTTVSLSIFVILVFAAY) threads the bilayer. Topologically, residues 470–831 (KSWRYRTKQN…EITQSVIQGR (362 aa)) are cytoplasmic. Residues 520-803 (FSSSNKLGQG…ELPSPKQPTF (284 aa)) form the Protein kinase domain. ATP-binding positions include 526-534 (LGQGGFGPV) and Lys548. Ser554 and Ser569 each carry phosphoserine. Positions 609-626 (TLKFEIDWQKRFNIIQGV) are caM-binding. Asp645 functions as the Proton acceptor in the catalytic mechanism. Phosphoserine occurs at positions 649 and 662. Thr679 bears the Phosphothreonine mark. Phosphoserine occurs at positions 722 and 814.

The protein belongs to the protein kinase superfamily. Ser/Thr protein kinase family.

The protein resides in the cell membrane. It carries out the reaction L-seryl-[protein] + ATP = O-phospho-L-seryl-[protein] + ADP + H(+). The catalysed reaction is L-threonyl-[protein] + ATP = O-phospho-L-threonyl-[protein] + ADP + H(+). In Arabidopsis thaliana (Mouse-ear cress), this protein is G-type lectin S-receptor-like serine/threonine-protein kinase At1g61390.